We begin with the raw amino-acid sequence, 546 residues long: Chaperonin GroEL (546 aa).

ATP contacts are provided by residues Thr-30–Pro-33, Lys-51, Asp-87–Thr-91, Gly-415, Asn-479–Ala-481, and Asp-495. A disordered region spans residues Lys-526–Phe-546. Positions Ala-534 to Phe-546 are enriched in gly residues.

The protein belongs to the chaperonin (HSP60) family. Forms a cylinder of 14 subunits composed of two heptameric rings stacked back-to-back. Interacts with the co-chaperonin GroES.

The protein localises to the cytoplasm. It catalyses the reaction ATP + H2O + a folded polypeptide = ADP + phosphate + an unfolded polypeptide.. In terms of biological role, together with its co-chaperonin GroES, plays an essential role in assisting protein folding. The GroEL-GroES system forms a nano-cage that allows encapsulation of the non-native substrate proteins and provides a physical environment optimized to promote and accelerate protein folding. In Xanthomonas oryzae pv. oryzae (strain MAFF 311018), this protein is Chaperonin GroEL.